A 422-amino-acid chain; its full sequence is Receptor homology region, transmembrane domain- and RING domain-containing protein 3 (422 aa).

The first 22 residues, 1 to 22, serve as a signal peptide directing secretion; the sequence is MNLVVLLILTLLLFIVSYVVDA. Residues 23–168 are Lumenal-facing; the sequence is GQVILVDSNI…NTEDSVWSLY (146 aa). An N-linked (GlcNAc...) asparagine glycan is attached at Asn31. Cys64 and Cys89 are joined by a disulfide. One can recognise a PA domain in the interval 81 to 146; it reads LVLIIRGGCS…RAGEMLKKYA (66 aa). The chain crosses the membrane as a helical span at residues 169-189; the sequence is ASIALILSLAIFCVMVTCVFF. Over 190–422 the chain is Cytoplasmic; it reads YRYCSTIRNS…HFASAHSLPD (233 aa). The RING-type; atypical zinc-finger motif lies at 232-274; the sequence is CAICLEDYIVGDKLRVLPCSHKFHVACVDSWLISWRTFCPVCK. Residues 344–368 form a disordered region; the sequence is LRRQASPLQSSSQRSHLSMKSSHSL. Over residues 349–368 the composition is skewed to polar residues; it reads SPLQSSSQRSHLSMKSSHSL.

The protein resides in the prevacuolar compartment membrane. It is found in the protein storage vacuole membrane. Functionally, involved in the trafficking of vacuolar proteins. May function as a sorting receptor for protein trafficking to the protein storage vacuole (PSV). In Arabidopsis thaliana (Mouse-ear cress), this protein is Receptor homology region, transmembrane domain- and RING domain-containing protein 3 (RMR3).